Here is a 298-residue protein sequence, read N- to C-terminus: 3-sulfolactaldehyde reductase (298 aa).

NAD(+) contacts are provided by residues 11 to 12 (QM), Asp-31, Leu-65, and Thr-96. Arg-123 provides a ligand contact to 2,3-dihydroxypropane-1-sulfonate. Residue Lys-171 is part of the active site. 174–178 (NNYMS) lines the 2,3-dihydroxypropane-1-sulfonate pocket. Lys-240 lines the NAD(+) pocket.

It belongs to the HIBADH-related family. 3-sulfolactaldehyde reductase subfamily. As to quaternary structure, homotetramer. Dimer of dimers.

The catalysed reaction is (2S)-3-sulfopropanediol + NAD(+) = (2S)-3-sulfolactaldehyde + NADH + H(+). The enzyme catalyses 4-hydroxybutanoate + NAD(+) = succinate semialdehyde + NADH + H(+). With respect to regulation, inhibited by the NADH analogs tetrahydro-NADH and hexahydro-NADH. In terms of biological role, reduces 3-sulfolactaldehyde (SLA) to 2,3-dihydroxypropane 1-sulfonate (DHPS). Metabolite profiling studies showed that the enzyme also catalyzes in vitro the NADH-dependent reduction of succinic semialdehyde (SSA) to 4-hydroxybutyrate (GHB), and that it could be involved in the metabolism of SSA, and other potentially toxic intermediates that may accumulate under stress conditions. However, the enzyme exhibits a 42,000-fold greater catalytic efficiency for the reduction of SLA over SSA. Shows no detectable activity on the analogous glycolytic intermediate glyceraldehyde-3-phosphate. This Escherichia coli (strain K12) protein is 3-sulfolactaldehyde reductase (yihU).